We begin with the raw amino-acid sequence, 146 residues long: D-aminoacyl-tRNA deacylase (146 aa).

Residues 137–138 (GP) carry the Gly-cisPro motif, important for rejection of L-amino acids motif.

It belongs to the DTD family. As to quaternary structure, homodimer.

The protein localises to the cytoplasm. The catalysed reaction is glycyl-tRNA(Ala) + H2O = tRNA(Ala) + glycine + H(+). It carries out the reaction a D-aminoacyl-tRNA + H2O = a tRNA + a D-alpha-amino acid + H(+). Functionally, an aminoacyl-tRNA editing enzyme that deacylates mischarged D-aminoacyl-tRNAs. Also deacylates mischarged glycyl-tRNA(Ala), protecting cells against glycine mischarging by AlaRS. Acts via tRNA-based rather than protein-based catalysis; rejects L-amino acids rather than detecting D-amino acids in the active site. By recycling D-aminoacyl-tRNA to D-amino acids and free tRNA molecules, this enzyme counteracts the toxicity associated with the formation of D-aminoacyl-tRNA entities in vivo and helps enforce protein L-homochirality. The protein is D-aminoacyl-tRNA deacylase of Acinetobacter baylyi (strain ATCC 33305 / BD413 / ADP1).